The sequence spans 256 residues: uncharacterized protein (256 aa).

A signal peptide spans 1-22 (MKSIKRIGLCISLLILSIFVTS). Cysteine 23 is lipidated: N-palmitoyl cysteine. Residue cysteine 23 is the site of S-diacylglycerol cysteine attachment.

Belongs to the staphylococcal tandem lipoprotein family.

It is found in the cell membrane. This is an uncharacterized protein from Staphylococcus aureus (strain USA300).